Here is a 192-residue protein sequence, read N- to C-terminus: Fe/S biogenesis protein NfuA (192 aa).

[4Fe-4S] cluster contacts are provided by C149 and C152.

This sequence belongs to the NfuA family. Homodimer. [4Fe-4S] cluster is required as a cofactor.

Involved in iron-sulfur cluster biogenesis. Binds a 4Fe-4S cluster, can transfer this cluster to apoproteins, and thereby intervenes in the maturation of Fe/S proteins. Could also act as a scaffold/chaperone for damaged Fe/S proteins. This chain is Fe/S biogenesis protein NfuA, found in Shewanella pealeana (strain ATCC 700345 / ANG-SQ1).